A 145-amino-acid polypeptide reads, in one-letter code: Large ribosomal subunit protein uL15 (145 aa).

Residues 1–11 (MELHSLKSTPG) show a composition bias toward polar residues. Positions 1–48 (MELHSLKSTPGSRKEKHRKGRGHAAGKGKQAGKGQSGQRKRSKVRLGF) are disordered. A compositionally biased stretch (basic residues) spans 14 to 26 (KEKHRKGRGHAAG).

Belongs to the universal ribosomal protein uL15 family. Part of the 50S ribosomal subunit.

Binds to the 23S rRNA. The protein is Large ribosomal subunit protein uL15 of Mycoplasmopsis pulmonis (strain UAB CTIP) (Mycoplasma pulmonis).